A 261-amino-acid polypeptide reads, in one-letter code: MVVVAPAQSPAAGAPKVLLLSGQPAATGGAPAGRALPVMVPGQQGASPEGASGVPPQARKRQRLTHLSPEEKALRRKLKNRVAAQTARDRKKARMSELEQQVVDLEEENQKLLLENQLLREKTHGLVVENQELRQRLGMDALVTEEEAETKGNGAGLVAGSAESAALRLRAPLQQVQAQLSPLQNISPWTLMALTLQTLSLTSCWAFCSTWTQSCSSDVLPQSLPAWSSSQKWTQKDPVPYRPPLLHPWGRHQPSWKPLMN.

Residues 1–185 (MVVVAPAQSP…VQAQLSPLQN (185 aa)) lie on the Cytoplasmic side of the membrane. Residues 27-37 (TGGAPAGRALP) show a composition bias toward low complexity. The segment at 27–65 (TGGAPAGRALPVMVPGQQGASPEGASGVPPQARKRQRLT) is disordered. Phosphoserine occurs at positions 47 and 68. The bZIP domain occupies 70 to 133 (EEKALRRKLK…HGLVVENQEL (64 aa)). A basic motif region spans residues 72-94 (KALRRKLKNRVAAQTARDRKKAR). The nuclear localization signal (NLS) stretch occupies residues 76–92 (RKLKNRVAAQTARDRKK). A leucine-zipper region spans residues 98 to 133 (LEQQVVDLEEENQKLLLENQLLREKTHGLVVENQEL). Residues 186–203 (ISPWTLMALTLQTLSLTS) form a helical; Signal-anchor for type II membrane protein membrane-spanning segment. Residues 204–261 (CWAFCSTWTQSCSSDVLPQSLPAWSSSQKWTQKDPVPYRPPLLHPWGRHQPSWKPLMN) lie on the Lumenal side of the membrane.

Belongs to the bZIP family. Isoform 1 interacts with HM13. Isoform 1 interacts with RNF139; the interaction induces ubiquitination and degradation of isoform 1. Isoform 1 interacts (via luminal domain) with DERL1; the interaction obviates the need for ectodomain shedding prior HM13/SPP-mediated XBP1 isoform 1 cleavage. Isoform 1 interacts with HDAC3 and AKT1; the interactions occur in endothelial cell (EC) under disturbed flow. Isoform 1 interacts with the oncoprotein FOS. Interacts with SIRT1. Isoform 1 is ubiquitinated, leading to proteasome-mediated degradation in response to ER stress. Post-translationally, X-box-binding protein 1, cytoplasmic form and luminal form are produced by intramembrane proteolytic cleavage of ER membrane-anchored isoform 1 triggered by HM13/SPP in a DERL1-RNF139-dependent and VCP/p97-independent manner. X-box-binding protein 1, luminal form is ubiquitinated leading to proteasomal degradation. In terms of processing, acetylated by EP300; acetylation positively regulates the transcriptional activity of XBP1. Deacetylated by SIRT1; deacetylation negatively regulates the transcriptional activity of XBP1.

Its subcellular location is the nucleus. It localises to the endoplasmic reticulum. The protein localises to the cytoplasm. It is found in the endoplasmic reticulum membrane. The protein resides in the membrane. In terms of biological role, functions as a transcription factor during endoplasmic reticulum (ER) stress by regulating the unfolded protein response (UPR). Required for cardiac myogenesis and hepatogenesis during embryonic development, and the development of secretory tissues such as exocrine pancreas and salivary gland. Involved in terminal differentiation of B lymphocytes to plasma cells and production of immunoglobulins. Modulates the cellular response to ER stress in a PIK3R-dependent manner. Binds to the cis-acting X box present in the promoter regions of major histocompatibility complex class II genes. Involved in VEGF-induced endothelial cell (EC) proliferation and retinal blood vessel formation during embryonic development but also for angiogenesis in adult tissues under ischemic conditions. Functions also as a major regulator of the UPR in obesity-induced insulin resistance and type 2 diabetes for the management of obesity and diabetes prevention. Acts as a weak transcriptional factor. Together with HDAC3, contributes to the activation of NFE2L2-mediated HMOX1 transcription factor gene expression in a PI(3)K/mTORC2/Akt-dependent signaling pathway leading to EC survival under disturbed flow/oxidative stress. Binds to the ER stress response element (ERSE) upon ER stress. Binds to the consensus 5'-GATGACGTG[TG]N(3)[AT]T-3' sequence related to cAMP responsive element (CRE)-like sequences. Associates preferentially to the HDAC3 gene promoter region in a static flow-dependent manner. Binds to the CDH5/VE-cadherin gene promoter region. This Bos taurus (Bovine) protein is X-box-binding protein 1.